The primary structure comprises 107 residues: Large ribosomal subunit protein uL24 (107 aa).

It belongs to the universal ribosomal protein uL24 family. In terms of assembly, part of the 50S ribosomal subunit.

Its function is as follows. One of two assembly initiator proteins, it binds directly to the 5'-end of the 23S rRNA, where it nucleates assembly of the 50S subunit. One of the proteins that surrounds the polypeptide exit tunnel on the outside of the subunit. This is Large ribosomal subunit protein uL24 from Coxiella burnetii (strain Dugway 5J108-111).